Here is a 445-residue protein sequence, read N- to C-terminus: 3-phosphoshikimate 1-carboxyvinyltransferase (445 aa).

Positions 25, 26, and 30 each coordinate 3-phosphoshikimate. Phosphoenolpyruvate is bound at residue Lys25. Phosphoenolpyruvate-binding residues include Gly98 and Arg126. The 3-phosphoshikimate site is built by Ser171, Gln173, Asp324, and Lys351. Position 173 (Gln173) interacts with phosphoenolpyruvate. Asp324 serves as the catalytic Proton acceptor. Phosphoenolpyruvate-binding residues include Arg355 and Arg398.

This sequence belongs to the EPSP synthase family. Monomer.

The protein resides in the cytoplasm. It carries out the reaction 3-phosphoshikimate + phosphoenolpyruvate = 5-O-(1-carboxyvinyl)-3-phosphoshikimate + phosphate. The protein operates within metabolic intermediate biosynthesis; chorismate biosynthesis; chorismate from D-erythrose 4-phosphate and phosphoenolpyruvate: step 6/7. Its function is as follows. Catalyzes the transfer of the enolpyruvyl moiety of phosphoenolpyruvate (PEP) to the 5-hydroxyl of shikimate-3-phosphate (S3P) to produce enolpyruvyl shikimate-3-phosphate and inorganic phosphate. In Hydrogenovibrio crunogenus (strain DSM 25203 / XCL-2) (Thiomicrospira crunogena), this protein is 3-phosphoshikimate 1-carboxyvinyltransferase.